The chain runs to 445 residues: Argininosuccinate synthase (445 aa).

ATP is bound by residues 17-25 and Ala43; that span reads AFSGGLDTS. Tyr99 is a binding site for L-citrulline. Residues Gly129 and Thr131 each contribute to the ATP site. Residues Thr131, Asn135, and Asp136 each coordinate L-aspartate. Asn135 is a binding site for L-citrulline. Asp136 contributes to the ATP binding site. Arg139 and Ser192 together coordinate L-citrulline. Asp194 is an ATP binding site. Residues Thr201, Glu203, and Glu280 each contribute to the L-citrulline site.

The protein belongs to the argininosuccinate synthase family. Type 2 subfamily. In terms of assembly, homotetramer.

Its subcellular location is the cytoplasm. It carries out the reaction L-citrulline + L-aspartate + ATP = 2-(N(omega)-L-arginino)succinate + AMP + diphosphate + H(+). It functions in the pathway amino-acid biosynthesis; L-arginine biosynthesis; L-arginine from L-ornithine and carbamoyl phosphate: step 2/3. The sequence is that of Argininosuccinate synthase (argG) from Ralstonia nicotianae (strain ATCC BAA-1114 / GMI1000) (Ralstonia solanacearum).